A 154-amino-acid chain; its full sequence is Lipoprotein signal peptidase (154 aa).

Helical transmembrane passes span 8–28 (LYLIVSLLVIIADQLLKNYIV), 58–78 (IFSGQMILFYLISIAAIAVVI), and 88–108 (NGLFDTGLALVLGGIIGNFID). Active-site residues include Asp117 and Asp133. The helical transmembrane segment at 131–151 (IADSAITVGIILVFIYLIFIS) threads the bilayer.

The protein belongs to the peptidase A8 family.

It localises to the cell membrane. It catalyses the reaction Release of signal peptides from bacterial membrane prolipoproteins. Hydrolyzes -Xaa-Yaa-Zaa-|-(S,diacylglyceryl)Cys-, in which Xaa is hydrophobic (preferably Leu), and Yaa (Ala or Ser) and Zaa (Gly or Ala) have small, neutral side chains.. Its pathway is protein modification; lipoprotein biosynthesis (signal peptide cleavage). Its function is as follows. This protein specifically catalyzes the removal of signal peptides from prolipoproteins. The chain is Lipoprotein signal peptidase from Lactobacillus johnsonii (strain CNCM I-12250 / La1 / NCC 533).